The following is a 462-amino-acid chain: Retinoic acid receptor alpha (462 aa).

A modulating region spans residues 1–87 (MASNSSSCPT…PPPLPRIYKP (87 aa)). Over residues 52 to 64 (GYSTPSPATIETQ) the composition is skewed to polar residues. A disordered region spans residues 52–77 (GYSTPSPATIETQSSSSEEIVPSPPS). Position 77 is a phosphoserine; by CDK7 (Ser-77). 2 NR C4-type zinc fingers span residues 88 to 108 (CFVC…CEGC) and 124 to 148 (CHRD…LQKC). The segment at residues 88–153 (CFVCQDKSSG…RLQKCFDVGM (66 aa)) is a DNA-binding region (nuclear receptor). The residue at position 96 (Ser-96) is a Phosphoserine; by PKB/AKT1. Positions 154–182 (SKESVRNDRNKKKKEAPKPECSESYTLTP) are hinge. Residues Lys-166 and Lys-171 each participate in a glycyl lysine isopeptide (Lys-Gly) (interchain with G-Cter in SUMO) cross-link. The NR LBD domain occupies 183 to 417 (EVGELIEKVR…PLIQEMLENS (235 aa)). Ser-219 carries the phosphoserine; by PKA modification. Residue Cys-235 coordinates all-trans-retinoate. The UBR5-degron signature appears at 254–258 (IADQI). Position 287 (Ser-287) interacts with all-trans-retinoate. Lys-347 is modified (N6,N6,N6-trimethyllysine). At Ser-369 the chain carries Phosphoserine; by PKA and RPS6KA5. Lys-399 is covalently cross-linked (Glycyl lysine isopeptide (Lys-Gly) (interchain with G-Cter in SUMO)). A required for binding corepressor NCOR1 region spans residues 404–419 (GSMPPLIQEMLENSEG). The 9aaTAD signature appears at 408–416 (PLIQEMLEN). Residues 420 to 462 (LDTLSGQSGGGTRDGGGLAPPPGSCSPSLSPSSHRSSPATQSP) are disordered. A compositionally biased stretch (gly residues) spans 426 to 437 (QSGGGTRDGGGL). Residues 444-462 (CSPSLSPSSHRSSPATQSP) show a composition bias toward low complexity.

The protein belongs to the nuclear hormone receptor family. NR1 subfamily. As to quaternary structure, heterodimer; with RXRA. Binds DNA preferentially as a heterodimer. RXRA serves as enhancer to induce RARA binding to RARE. Interacts with RXRG. Interacts with NCOA3 and NCOA6 coactivators, leading to a strong increase of transcription of target genes. Interacts with NCOA7; the interaction requires ligand-binding. Interacts (via the ligand-binding domain) with PRAME; interaction is direct and ligand (retinoic acid)-dependent. Interacts with PRKAR1A; the interaction negatively regulates RARA transcriptional activity. Interacts with NCOR1; the interaction occurs in the absence of ligand and represses transcriptional activity. Interacts with NCOR2. Interacts with PRMT2. Interacts with LRIF1. Interacts with ASXL1 and NCOA1. Interacts with ACTN4. Interacts with CDK7; the interaction is enhanced by interaction with GTF2H3. Interacts with GTF2H3; the interaction requires prior phosphorylation on Ser-369 which then enhances interaction with CDK7. In a complex with HDAC3, HDAC5 and HDAC7; the HDACs serve as corepressors of RARA, causing its deacetylation and inhibition of RARE DNA element binding; association with HDAC3, HDAC5 and HDAC7 is increased upon oscillatory shear stress. In the absence of hormonal ligand, interacts with TACC1. Post-translationally, phosphorylated on serine and threonine residues. Phosphorylation does not change during cell cycle. Phosphorylation on Ser-77 is crucial for the N-terminal AF1 transcriptional activity. Under stress conditions, MAPK8 enhances phosphorylation on Thr-181, Ser-445 and Ser-461 leading to RARA ubiquitination and degradation. Phosphorylation by AKT1 inhibits the transactivation activity. On retinoic acid stimulation, phosphorylation on Ser-369 by RPS6KA5 promotes interaction with GTF2H3 and the CDK7-mediated phosphorylation of Ser-77. Ubiquitinated by UBR5, leading to its degradation: UBR5 specifically recognizes and binds ligand-bound RARA when it is not associated with coactivators (NCOAs). In presence of NCOAs, the UBR5-degron is not accessible, preventing its ubiquitination and degradation. In terms of processing, sumoylated with SUMO2, mainly on Lys-399 which is also required for SENP6 binding. On all-trans retinoic acid (ATRA) binding, a conformational change may occur that allows sumoylation on two additional site, Lys-166 and Lys-171. Probably desumoylated by SENP6. Sumoylation levels determine nuclear localization and regulate ATRA-mediated transcriptional activity. Post-translationally, acetylated; acetylation is increased upon pulsatile shear stress and decreased upon oscillatory shear stress. Expressed in Sertoli cells and germ cells.

The protein resides in the nucleus. It localises to the cytoplasm. Its function is as follows. Receptor for retinoic acid. Retinoic acid receptors bind as heterodimers to their target response elements in response to their ligands, all-trans or 9-cis retinoic acid, and regulate gene expression in various biological processes. The RXR/RAR heterodimers bind to the retinoic acid response elements (RARE) composed of tandem 5'-AGGTCA-3' sites known as DR1-DR5. In the absence of ligand, the RXR-RAR heterodimers associate with a multiprotein complex containing transcription corepressors that induce histone deacetylation, chromatin condensation and transcriptional suppression. On ligand binding, the corepressors dissociate from the receptors and associate with the coactivators leading to transcriptional activation. Formation of heterocomplex with histone deacetylases might lead to inhibition of RARE DNA element binding and to transcriptional repression. Transcriptional activation and RARE DNA element binding might be supported by the transcription factor KLF2. RARA plays an essential role in the regulation of retinoic acid-induced germ cell development during spermatogenesis. Has a role in the survival of early spermatocytes at the beginning prophase of meiosis. In Sertoli cells, may promote the survival and development of early meiotic prophase spermatocytes. In concert with RARG, required for skeletal growth, matrix homeostasis and growth plate function. Together with RXRA, positively regulates microRNA-10a expression, thereby inhibiting the GATA6/VCAM1 signaling response to pulsatile shear stress in vascular endothelial cells. In association with HDAC3, HDAC5 and HDAC7 corepressors, plays a role in the repression of microRNA-10a and thereby promotes the inflammatory response. The sequence is that of Retinoic acid receptor alpha (Rara) from Mus musculus (Mouse).